The following is a 655-amino-acid chain: Tetratricopeptide repeat protein 30 homolog (655 aa).

7 TPR repeats span residues 10–43 (EGHVTRTIYNLIKDKRYEDVIECITSFGEAANTR), 44–76 (AGLSTLGHCYYHAQKYEEAATCYEQLCQLAPKE), 143–176 (ADTLNDEGCLLFQADQHEAAVQRFQAALQVGGFN), 178–210 (LVAYNVALAHFQKKQRAQALDYTSEIVERGMRN), 385–418 (LAAKVQEVRATNEQQALRDALKDYEQALELYLPV), 450–484 (SIWRLNAGHVLFMQGDKYNEAAAFYEPIVRQHSDD), and 534–567 (CIVNLVVGTLYCAKSNYEFGLSRIAHALESGSGN).

Belongs to the TTC30/dfy-1/fleer family.

The protein resides in the cell projection. The protein localises to the cilium. In terms of biological role, required for polyglutamylation of axonemal tubulin in sensory cilia. Plays a role in anterograde intraflagellar transport (IFT), the process by which cilia precursors are transported from the base of the cilium to the site of their incorporation at the tip. The sequence is that of Tetratricopeptide repeat protein 30 homolog from Drosophila melanogaster (Fruit fly).